Reading from the N-terminus, the 210-residue chain is Large ribosomal subunit protein uL4 (210 aa).

The tract at residues 46–96 (QGNASTKTRAEVRGGGRKPWRQKGTGRARAGSNRSPLWRGGGVIFGPKPRD) is disordered. Residues 60-71 (GGRKPWRQKGTG) are compositionally biased toward basic residues.

The protein belongs to the universal ribosomal protein uL4 family. Part of the 50S ribosomal subunit.

In terms of biological role, one of the primary rRNA binding proteins, this protein initially binds near the 5'-end of the 23S rRNA. It is important during the early stages of 50S assembly. It makes multiple contacts with different domains of the 23S rRNA in the assembled 50S subunit and ribosome. Forms part of the polypeptide exit tunnel. This is Large ribosomal subunit protein uL4 from Gloeothece citriformis (strain PCC 7424) (Cyanothece sp. (strain PCC 7424)).